The sequence spans 693 residues: MA3 DOMAIN-CONTAINING TRANSLATION REGULATORY FACTOR 2 (693 aa).

The segment at 25-60 is disordered; the sequence is SLDPLPQANMAEDLTKSRRHSPIKVEGSEETWGVED. An MI 1 domain is found at 90 to 211; sequence EYKKKATVIV…PPAFLKKQMK (122 aa). Positions 241–248 match the Nuclear localization signal 1 motif; that stretch reads EKRWGGTD. MI domains are found at residues 254–375, 389–510, and 560–681; these read DVKA…SLSA, VFKD…EVLN, and EVKE…EDSQ. The Nuclear localization signal 2 signature appears at 430–437; sequence VKYLITLA. Residues 673-693 are disordered; that stretch reads ESFASEDSQSKKQNGSSSSSG. The segment covering 683 to 693 has biased composition (low complexity); it reads KKQNGSSSSSG.

It belongs to the PDCD4 family. Binds to EIF4A1. The association with ribosomes is modulated by cellular energy status and TOR activity. In terms of tissue distribution, mostly expressed in reproductive tissues, such as flower buds and flowers, and, to a lower extent, in vegetative tissues, such as leaves, roots and stems.

It is found in the nucleus. It localises to the cytoplasm. Its subcellular location is the cytosol. Involved in target of rapamycin (TOR)-regulated translation control, especially under energy-deficient conditions. This Arabidopsis thaliana (Mouse-ear cress) protein is MA3 DOMAIN-CONTAINING TRANSLATION REGULATORY FACTOR 2.